Here is a 1339-residue protein sequence, read N- to C-terminus: Aldehyde oxidase 1 (1339 aa).

The 2Fe-2S ferredoxin-type domain maps to Ser-5 to Ile-92. [2Fe-2S] cluster is bound by residues Cys-44, Cys-49, Cys-52, and Cys-74. Gln-113 serves as a coordination point for Mo-molybdopterin. [2Fe-2S] cluster-binding residues include Cys-114, Cys-117, Cys-149, and Cys-151. Cys-151 serves as a coordination point for Mo-molybdopterin. One can recognise an FAD-binding PCMH-type domain in the interval Phe-236–Lys-421. FAD is bound by residues Val-264–Val-271, Ala-345, Ser-354, His-358, Asp-367, and Leu-411. Residues Ala-807–Phe-808 and Met-1048 each bind Mo-molybdopterin. Ser-1069 is subject to Phosphoserine. Mo-molybdopterin-binding positions include Gly-1089 to Val-1092, Gln-1204, and Leu-1269. Catalysis depends on Glu-1271, which acts as the Proton acceptor; for azaheterocycle hydroxylase activity.

Belongs to the xanthine dehydrogenase family. As to quaternary structure, homodimer. [2Fe-2S] cluster serves as cofactor. FAD is required as a cofactor. It depends on Mo-molybdopterin as a cofactor. The N-terminus is blocked. Expressed at high levels in liver, lung and spleen. Also expressed in kindey, eye, testis, duodenum, esophagus and thymus (at protein level).

Its subcellular location is the cytoplasm. The enzyme catalyses an aldehyde + O2 + H2O = a carboxylate + H2O2 + H(+). It catalyses the reaction retinal + O2 + H2O = retinoate + H2O2 + H(+). Functionally, oxidase with broad substrate specificity, oxidizing aromatic azaheterocycles, such as N1-methylnicotinamide, N-methylphthalazinium and phthalazine, as well as aldehydes, such as benzaldehyde, retinal, pyridoxal, and vanillin. Plays a key role in the metabolism of xenobiotics and drugs containing aromatic azaheterocyclic substituents. Is probably involved in the regulation of reactive oxygen species homeostasis. May be a prominent source of superoxide generation via the one-electron reduction of molecular oxygen. May also catalyze nitric oxide (NO) production via the reduction of nitrite to NO with NADH or aldehyde as electron donor. May play a role in adipogenesis. This is Aldehyde oxidase 1 from Bos taurus (Bovine).